The chain runs to 242 residues: Small ribosomal subunit protein uS2 (242 aa).

Belongs to the universal ribosomal protein uS2 family.

The chain is Small ribosomal subunit protein uS2 from Shewanella baltica (strain OS223).